Consider the following 183-residue polypeptide: Phosphopantetheine adenylyltransferase (183 aa).

Thr-13 contributes to the substrate binding site. ATP-binding positions include 13 to 14 (TF) and His-21. Residues Lys-45, Leu-81, and Arg-95 each coordinate substrate. ATP contacts are provided by residues 96–98 (GLR), Glu-106, and 131–137 (HQFISSR).

It belongs to the bacterial CoaD family. As to quaternary structure, homohexamer. Mg(2+) is required as a cofactor.

It localises to the cytoplasm. The enzyme catalyses (R)-4'-phosphopantetheine + ATP + H(+) = 3'-dephospho-CoA + diphosphate. The protein operates within cofactor biosynthesis; coenzyme A biosynthesis; CoA from (R)-pantothenate: step 4/5. Reversibly transfers an adenylyl group from ATP to 4'-phosphopantetheine, yielding dephospho-CoA (dPCoA) and pyrophosphate. The sequence is that of Phosphopantetheine adenylyltransferase from Rhodospirillum centenum (strain ATCC 51521 / SW).